A 319-amino-acid polypeptide reads, in one-letter code: MNYTPYSSPAPGLTISPTMDPVTWVYFSVTFLAMATCVCGIVGNSMVIWLLSFHRVQRSPFCTYVLNLAVADLLFLLCMASLLSLETGPLLTASTSARVYEGMKRIKYFAYTAGLSLLTAISTQRCLSVLFPIWYKCHRPQHLSGVVCGVLWALALLMNFLASFFCVQFWHPDKYQCFKVDMVFNSLILGIFMPVMVLTSAIIFIRMRKNSLLQRRQPRRLYVVILTSVLVFLTCSLPLGINWFLLYWVELPQAVRLLYVCSSRFSSSLSSSANPVIYFLVGSQKSHRLQESLGAVLGRALQDEPEGRETPSTCTNDGV.

The Extracellular portion of the chain corresponds to 1–30; it reads MNYTPYSSPAPGLTISPTMDPVTWVYFSVT. Residues 31 to 51 traverse the membrane as a helical segment; the sequence is FLAMATCVCGIVGNSMVIWLL. Residues 52-64 are Cytoplasmic-facing; it reads SFHRVQRSPFCTY. Residues 65-85 form a helical membrane-spanning segment; sequence VLNLAVADLLFLLCMASLLSL. Over 86–92 the chain is Extracellular; that stretch reads ETGPLLT. A helical membrane pass occupies residues 93 to 113; it reads ASTSARVYEGMKRIKYFAYTA. The Cytoplasmic portion of the chain corresponds to 114–144; it reads GLSLLTAISTQRCLSVLFPIWYKCHRPQHLS. A helical transmembrane segment spans residues 145-165; that stretch reads GVVCGVLWALALLMNFLASFF. Topologically, residues 166–184 are extracellular; that stretch reads CVQFWHPDKYQCFKVDMVF. Residues 185–205 form a helical membrane-spanning segment; it reads NSLILGIFMPVMVLTSAIIFI. The Cytoplasmic segment spans residues 206 to 220; sequence RMRKNSLLQRRQPRR. The helical transmembrane segment at 221 to 241 threads the bilayer; it reads LYVVILTSVLVFLTCSLPLGI. Topologically, residues 242 to 260 are extracellular; that stretch reads NWFLLYWVELPQAVRLLYV. A helical transmembrane segment spans residues 261–281; sequence CSSRFSSSLSSSANPVIYFLV. The Cytoplasmic portion of the chain corresponds to 282-319; sequence GSQKSHRLQESLGAVLGRALQDEPEGRETPSTCTNDGV.

The protein belongs to the G-protein coupled receptor 1 family. Mas subfamily. In terms of tissue distribution, co-expressed in the small diameter neurons with P2X3 and VR1 in dorsal root ganglia.

It localises to the cell membrane. In terms of biological role, may regulate nociceptor function and/or development, including the sensation or modulation of pain. Functions as a specific membrane receptor for beta-alanine. The receptor couples with G-protein G(q) and G(i). The sequence is that of Mas-related G-protein coupled receptor member D (Mrgprd) from Rattus norvegicus (Rat).